The primary structure comprises 110 residues: UPF0339 protein PA0329 (110 aa).

2 repeat units span residues Ala-10–Val-58 and Ala-61–Glu-109. Residues Glu-91–Ser-110 form a disordered region.

It belongs to the UPF0339 family. Duplicated subfamily.

This Pseudomonas aeruginosa (strain ATCC 15692 / DSM 22644 / CIP 104116 / JCM 14847 / LMG 12228 / 1C / PRS 101 / PAO1) protein is UPF0339 protein PA0329.